The primary structure comprises 414 residues: Glucose-1-phosphate adenylyltransferase (414 aa).

Residues tyrosine 99, glycine 164, 181 to 182 (EK), and serine 199 contribute to the alpha-D-glucose 1-phosphate site.

The protein belongs to the bacterial/plant glucose-1-phosphate adenylyltransferase family. Homotetramer.

The catalysed reaction is alpha-D-glucose 1-phosphate + ATP + H(+) = ADP-alpha-D-glucose + diphosphate. It participates in glycan biosynthesis; glycogen biosynthesis. Functionally, involved in the biosynthesis of ADP-glucose, a building block required for the elongation reactions to produce glycogen. Catalyzes the reaction between ATP and alpha-D-glucose 1-phosphate (G1P) to produce pyrophosphate and ADP-Glc. The sequence is that of Glucose-1-phosphate adenylyltransferase from Bifidobacterium longum (strain DJO10A).